Reading from the N-terminus, the 83-residue chain is Small ribosomal subunit protein bS16 (83 aa).

The protein belongs to the bacterial ribosomal protein bS16 family.

The sequence is that of Small ribosomal subunit protein bS16 from Borrelia turicatae (strain 91E135).